A 59-amino-acid chain; its full sequence is Small integral membrane protein 30 (59 aa).

Residues 1 to 24 form the signal peptide; the sequence is MTSVSTQLSLVLMSLLLVLPVVEA. The Extracellular portion of the chain corresponds to 25–29; that stretch reads VEAGD. The helical transmembrane segment at 30–50 threads the bilayer; the sequence is AIALLLGVVLSITGICACLGV. Topologically, residues 51 to 59 are cytoplasmic; the sequence is YARKRNGQM.

In terms of assembly, interacts (via transmembrane domain) with antiviral protein MAVS (via transmembrane domain); the interaction disrupts MAVS interaction with RIGI and inhibits MAVS aggregation, resulting in the repression of type I interferon signaling and innate immune responses.

The protein localises to the endoplasmic reticulum membrane. It localises to the mitochondrion membrane. In terms of biological role, negatively regulates antiviral innate immune responses. Disrupts the interaction of antiviral protein MAVS with innate immune receptor RIGI and inhibits MAVS aggregation, resulting in the repression of type I interferon signaling and innate immune responses. This is Small integral membrane protein 30 from Homo sapiens (Human).